A 593-amino-acid chain; its full sequence is Corrinoid activation enzyme RamQ (593 aa).

The region spanning 1–76 (MRVLFPLLEE…GMEIYASREQ (76 aa)) is the 2Fe-2S ferredoxin-type domain. [2Fe-2S] cluster contacts are provided by cysteine 35, cysteine 41, cysteine 44, and cysteine 60.

[2Fe-2S] cluster is required as a cofactor.

In terms of biological role, involved in the degradation of the quaternary amines L-proline betaine and L-carnitine. Component of a corrinoid-dependent methyltransferase system that transfers a methyl group from L-proline betaine or L-carnitine to tetrahydrofolate (THF), forming methyl-THF, a key intermediate in the Wood-Ljungdahl acetogenesis pathway. RamQ is not required for the methyl transfer, but it stimulates reduction of reconstituted MtqC from the Co(II) state to the Co(I) state in vitro. It also stimulates the rate of THF methylation. The polypeptide is Corrinoid activation enzyme RamQ (Eubacterium limosum).